Reading from the N-terminus, the 222-residue chain is MNSKLNSAMYSAHMIMRHAFGYNDYNNKYGRINDVYNKMADGKRLRLEEREVKSLRGLVCTLKMMIKNTDIITYDEECCICMAKNNRKEALPCQHNVCRDCYYKPMRNNCPVCNMEWPMRKDDKHAAPYGLAEYAHTYGGEEQRTPSPPVLGTVEGGDISPRLVGAIRTNDTWLSSRRDSPYHIENRIHNNNNNNYDENNPDDLPVIHPPRRRHRQTAHISI.

The RING-type zinc-finger motif lies at 78–114; that stretch reads CCICMAKNNRKEALPCQHNVCRDCYYKPMRNNCPVCN. The disordered stretch occupies residues 184-222; that stretch reads IENRIHNNNNNNYDENNPDDLPVIHPPRRRHRQTAHISI. The segment covering 189–198 has biased composition (low complexity); that stretch reads HNNNNNNYDE. A compositionally biased stretch (basic residues) spans 209 to 222; it reads PPRRRHRQTAHISI.

The polypeptide is Putative RING finger protein ORF118 (Magallana gigas (Pacific oyster)).